The chain runs to 56 residues: UPF0434 protein Ecaj_0131 (56 aa).

This sequence belongs to the UPF0434 family.

In Ehrlichia canis (strain Jake), this protein is UPF0434 protein Ecaj_0131.